Here is a 163-residue protein sequence, read N- to C-terminus: Ribonuclease H (163 aa).

An RNase H type-1 domain is found at 1 to 142 (MRKQVAIFTD…CDELARTAAC (142 aa)). Mg(2+) contacts are provided by Asp10, Glu48, Asp70, and Asp134.

It belongs to the RNase H family. In terms of assembly, monomer. Requires Mg(2+) as cofactor.

It is found in the cytoplasm. It catalyses the reaction Endonucleolytic cleavage to 5'-phosphomonoester.. Functionally, endonuclease that specifically degrades the RNA of RNA-DNA hybrids. The chain is Ribonuclease H from Sodalis glossinidius (strain morsitans).